The chain runs to 266 residues: 3-methyl-2-oxobutanoate hydroxymethyltransferase 2 (266 aa).

Mg(2+) is bound by residues D45 and D84. Residues 45 to 46 (DS), D84, and K112 contribute to the 3-methyl-2-oxobutanoate site. E114 is a binding site for Mg(2+). The active-site Proton acceptor is the E181.

Belongs to the PanB family. As to quaternary structure, homodecamer; pentamer of dimers. Requires Mg(2+) as cofactor.

The protein localises to the cytoplasm. It carries out the reaction 3-methyl-2-oxobutanoate + (6R)-5,10-methylene-5,6,7,8-tetrahydrofolate + H2O = 2-dehydropantoate + (6S)-5,6,7,8-tetrahydrofolate. The protein operates within cofactor biosynthesis; (R)-pantothenate biosynthesis; (R)-pantoate from 3-methyl-2-oxobutanoate: step 1/2. Catalyzes the reversible reaction in which hydroxymethyl group from 5,10-methylenetetrahydrofolate is transferred onto alpha-ketoisovalerate to form ketopantoate. This chain is 3-methyl-2-oxobutanoate hydroxymethyltransferase 2, found in Pseudomonas fluorescens (strain ATCC BAA-477 / NRRL B-23932 / Pf-5).